Reading from the N-terminus, the 453-residue chain is Probable exopolygalacturonase B (453 aa).

The first 16 residues, 1 to 16, serve as a signal peptide directing secretion; it reads MKFLALAALFASTVSS. Residues Asn185 and Asn225 are each glycosylated (N-linked (GlcNAc...) asparagine). Asp255 (proton donor) is an active-site residue. Residues Cys257 and Cys274 are joined by a disulfide bond. 2 N-linked (GlcNAc...) asparagine glycosylation sites follow: Asn263 and Asn275. His278 is a catalytic residue. 2 PbH1 repeats span residues 295-316 and 327-348; these read IENVWIENVTLLNGENGARLKA and INNVTYKNIHVENTDNPIVLDQ. 4 N-linked (GlcNAc...) asparagine glycosylation sites follow: Asn302, Asn329, Asn354, and Asn366. The PbH1 3 repeat unit spans residues 362–405; that stretch reads PSRVNFTNIVFENIYGTSSGKHGKVVADLTCSPNAVCSGIRLKN. A disulfide bond links Cys392 and Cys398. A glycan (N-linked (GlcNAc...) asparagine) is linked at Asn436.

Belongs to the glycosyl hydrolase 28 family.

It localises to the secreted. It carries out the reaction [(1-&gt;4)-alpha-D-galacturonosyl](n) + H2O = alpha-D-galacturonate + [(1-&gt;4)-alpha-D-galacturonosyl](n-1). Its function is as follows. Specific in hydrolyzing the terminal glycosidic bond of polygalacturonic acid and oligogalacturonates. The sequence is that of Probable exopolygalacturonase B (pgxB) from Neosartorya fischeri (strain ATCC 1020 / DSM 3700 / CBS 544.65 / FGSC A1164 / JCM 1740 / NRRL 181 / WB 181) (Aspergillus fischerianus).